The following is a 1127-amino-acid chain: DNA-directed RNA polymerase I subunit RPA2 homolog (1127 aa).

Ser-1025 carries the phosphoserine modification.

The protein belongs to the RNA polymerase beta chain family. Component of the RNA polymerase I (Pol I) complex consisting of at least 13 subunits.

The protein resides in the nucleus. It is found in the nucleolus. The catalysed reaction is RNA(n) + a ribonucleoside 5'-triphosphate = RNA(n+1) + diphosphate. Antisense ribosomal siRNAs silence rRNA expression during the elongation phase by decreasing rpoa-2 occupancy downstream of the RNAi-targeted region in nrde-2-dependent manner. In terms of biological role, DNA-dependent RNA polymerase catalyzes the transcription of DNA into RNA using the four ribonucleoside triphosphates as substrates. Second largest core component of RNA polymerase I which synthesizes ribosomal RNA precursors. Proposed to contribute to the polymerase catalytic activity and forms the polymerase active center together with the largest subunit. Pol I is composed of mobile elements and RPA2 is part of the core element with the central large cleft and probably a clamp element that moves to open and close the cleft. Specifically binds to 18S, 5.8S and 26S rDNA, but not to 5S rDNA. The polypeptide is DNA-directed RNA polymerase I subunit RPA2 homolog (Caenorhabditis elegans).